A 209-amino-acid chain; its full sequence is Uracil phosphoribosyltransferase (209 aa).

Residues Arg79, Arg104, and 131–139 each bind 5-phospho-alpha-D-ribose 1-diphosphate; that span reads DPMLATGGS. Uracil-binding positions include Ile194 and 199 to 201; that span reads GDA. Asp200 contributes to the 5-phospho-alpha-D-ribose 1-diphosphate binding site.

Belongs to the UPRTase family. Mg(2+) serves as cofactor.

The enzyme catalyses UMP + diphosphate = 5-phospho-alpha-D-ribose 1-diphosphate + uracil. The protein operates within pyrimidine metabolism; UMP biosynthesis via salvage pathway; UMP from uracil: step 1/1. With respect to regulation, allosterically activated by GTP. Its function is as follows. Catalyzes the conversion of uracil and 5-phospho-alpha-D-ribose 1-diphosphate (PRPP) to UMP and diphosphate. This chain is Uracil phosphoribosyltransferase, found in Clostridium perfringens (strain ATCC 13124 / DSM 756 / JCM 1290 / NCIMB 6125 / NCTC 8237 / Type A).